The chain runs to 641 residues: Macrolide export ATP-binding/permease protein MacB (641 aa).

The ABC transporter domain maps to 2–240 (IKLENIKKSF…LKQNLKEIKP (239 aa)). 38–45 (GQSGSGKS) is an ATP binding site. A run of 4 helical transmembrane segments spans residues 268 to 288 (FLTM…VALA), 516 to 536 (LLIS…VMNI), 565 to 585 (FLIE…GLAY), and 601 to 621 (IFST…GIVF).

The protein belongs to the ABC transporter superfamily. Macrolide exporter (TC 3.A.1.122) family. Homodimer.

The protein resides in the cell inner membrane. Functionally, non-canonical ABC transporter that contains transmembrane domains (TMD), which form a pore in the inner membrane, and an ATP-binding domain (NBD), which is responsible for energy generation. Confers resistance against macrolides. The sequence is that of Macrolide export ATP-binding/permease protein MacB from Campylobacter fetus subsp. fetus (strain 82-40).